The sequence spans 123 residues: Ribosome-binding factor A (123 aa).

This sequence belongs to the RbfA family. In terms of assembly, monomer. Binds 30S ribosomal subunits, but not 50S ribosomal subunits or 70S ribosomes.

It localises to the cytoplasm. One of several proteins that assist in the late maturation steps of the functional core of the 30S ribosomal subunit. Associates with free 30S ribosomal subunits (but not with 30S subunits that are part of 70S ribosomes or polysomes). Required for efficient processing of 16S rRNA. May interact with the 5'-terminal helix region of 16S rRNA. The chain is Ribosome-binding factor A from Chlamydia trachomatis serovar A (strain ATCC VR-571B / DSM 19440 / HAR-13).